The chain runs to 409 residues: Alpha-1-antitrypsin (409 aa).

The first 15 residues, 1–15 (LLLAGLCCLLPGSLA), serve as a signal peptide directing secretion. Residues 18-39 (PQGDAAQKTDTPPHDQNHPTLN) are disordered. Residues Asn61, Asn98, Asn136, and Asn262 are each glycosylated (N-linked (GlcNAc...) asparagine). An RCL region spans residues 364 to 383 (GAMFLEAIPMSIPPEVKFNK). Ser374 carries the phosphoserine modification.

The protein belongs to the serpin family. Interacts with CELA2A. Interacts with ERGIC3 and LMAN1/ERGIC53. Interacts with PRSS1/Trypsin. In terms of tissue distribution, plasma.

It is found in the secreted. Its function is as follows. Inhibitor of serine proteases. Its primary target is elastase, but it also has a moderate affinity for plasmin and thrombin. Inhibits trypsin, chymotrypsin and plasminogen activator. This Papio anubis (Olive baboon) protein is Alpha-1-antitrypsin (SERPINA1).